A 226-amino-acid chain; its full sequence is UPF0758 protein SE_1336 (226 aa).

Residues 102–224 (QITHPSDVAS…FTSLVEAGYF (123 aa)) form the MPN domain. Residues histidine 173, histidine 175, and aspartate 186 each coordinate Zn(2+). The JAMM motif signature appears at 173–186 (HNHPSGDVTPSKED).

The protein belongs to the UPF0758 family.

This Staphylococcus epidermidis (strain ATCC 12228 / FDA PCI 1200) protein is UPF0758 protein SE_1336.